Reading from the N-terminus, the 208-residue chain is Thioredoxin domain-containing protein 9 (208 aa).

A Thioredoxin domain is found at 68–179 (YEEVADEKEF…MENRLARSEV (112 aa)).

Expressed throughout the body with high expression in the nervous system, including the ventral nerve cord and tail neurons, and vulva.

The protein resides in the nucleus. It is found in the cytoplasm. Its function is as follows. Required for normal microtubule organization and function. Regulates tubulin acetylation in ALM and PLM neurons. The chain is Thioredoxin domain-containing protein 9 from Caenorhabditis elegans.